We begin with the raw amino-acid sequence, 403 residues long: Tyrosine--tRNA ligase (403 aa).

The 'HIGH' region signature appears at 42 to 51 (PTAPDLHLGH). Positions 226–230 (KMSKS) match the 'KMSKS' region motif. Residue Lys229 coordinates ATP. One can recognise an S4 RNA-binding domain in the interval 339 to 400 (LRLAGLLTAA…GKRNFARVLL (62 aa)).

It belongs to the class-I aminoacyl-tRNA synthetase family. TyrS type 2 subfamily. In terms of assembly, homodimer.

Its subcellular location is the cytoplasm. The enzyme catalyses tRNA(Tyr) + L-tyrosine + ATP = L-tyrosyl-tRNA(Tyr) + AMP + diphosphate + H(+). In terms of biological role, catalyzes the attachment of tyrosine to tRNA(Tyr) in a two-step reaction: tyrosine is first activated by ATP to form Tyr-AMP and then transferred to the acceptor end of tRNA(Tyr). This Xanthomonas euvesicatoria pv. vesicatoria (strain 85-10) (Xanthomonas campestris pv. vesicatoria) protein is Tyrosine--tRNA ligase.